Reading from the N-terminus, the 419-residue chain is Synaptic vesicle membrane protein VAT-1 homolog-like (419 aa).

Basic and acidic residues predominate over residues 1-25 (MAKEGVEKAEETEQMIEKEAGKEPA). 2 disordered regions span residues 1–36 (MAKE…SHRL) and 384–419 (PTPL…PFIQ). Residue S392 is modified to Phosphoserine. Residues T393 and T395 each carry the phosphothreonine modification. Position 396 is a phosphoserine (S396). Acidic residues predominate over residues 397–407 (EAGEEEEDHEG). Residues 408-419 (DSENKERMPFIQ) are compositionally biased toward basic and acidic residues.

This sequence belongs to the zinc-containing alcohol dehydrogenase family. Quinone oxidoreductase subfamily. As to expression, detected in skin fibroblasts.

The chain is Synaptic vesicle membrane protein VAT-1 homolog-like (VAT1L) from Homo sapiens (Human).